Reading from the N-terminus, the 64-residue chain is Large ribosomal subunit protein bL33c (64 aa).

The protein belongs to the bacterial ribosomal protein bL33 family.

The protein resides in the plastid. It is found in the chloroplast. The sequence is that of Large ribosomal subunit protein bL33c from Huperzia lucidula (Shining clubmoss).